The chain runs to 731 residues: 1,4-alpha-glucan branching enzyme GlgB (731 aa).

The active-site Nucleophile is Asp411. Residue Glu464 is the Proton donor of the active site.

This sequence belongs to the glycosyl hydrolase 13 family. GlgB subfamily. In terms of assembly, monomer.

It catalyses the reaction Transfers a segment of a (1-&gt;4)-alpha-D-glucan chain to a primary hydroxy group in a similar glucan chain.. It functions in the pathway glycan biosynthesis; glycogen biosynthesis. Functionally, catalyzes the formation of the alpha-1,6-glucosidic linkages in glycogen by scission of a 1,4-alpha-linked oligosaccharide from growing alpha-1,4-glucan chains and the subsequent attachment of the oligosaccharide to the alpha-1,6 position. The chain is 1,4-alpha-glucan branching enzyme GlgB from Mycolicibacterium paratuberculosis (strain ATCC BAA-968 / K-10) (Mycobacterium paratuberculosis).